We begin with the raw amino-acid sequence, 251 residues long: Uridylate kinase (251 aa).

26-29 is a binding site for ATP; it reads KLGG. UMP is bound at residue Gly67. Residues Gly68 and Arg72 each contribute to the ATP site. UMP contacts are provided by residues Asp87 and 148–155; that span reads MGLPYFST. Residues Phe181 and Asp184 each coordinate ATP.

It belongs to the UMP kinase family. As to quaternary structure, homohexamer.

It localises to the cytoplasm. It catalyses the reaction UMP + ATP = UDP + ADP. It functions in the pathway pyrimidine metabolism; CTP biosynthesis via de novo pathway; UDP from UMP (UMPK route): step 1/1. With respect to regulation, inhibited by UTP. Catalyzes the reversible phosphorylation of UMP to UDP. The polypeptide is Uridylate kinase (Mycolicibacterium vanbaalenii (strain DSM 7251 / JCM 13017 / BCRC 16820 / KCTC 9966 / NRRL B-24157 / PYR-1) (Mycobacterium vanbaalenii)).